A 1591-amino-acid polypeptide reads, in one-letter code: Dicer-like protein 1 (1591 aa).

2 stretches are compositionally biased toward basic and acidic residues: residues 1-20 (MEVH…RYDD) and 41-52 (SKPRKISERKRA). The segment at 1 to 52 (MEVHDGLKSPDKAAKSRYDDDRIDQDSEDEAVRLVANPDPSKPRKISERKRA) is disordered. One can recognise a Helicase ATP-binding domain in the interval 115–298 (LFERAKQKNT…SYERATHELE (184 aa)). 128 to 135 (LDTGTGKT) contributes to the ATP binding site. Positions 242–245 (DEAH) match the DEAH box motif. In terms of domain architecture, Helicase C-terminal spans 439 to 607 (KLIEILAECF…CLSLPKDRIM (169 aa)). Positions 639–729 (SLVVLAEFVA…KSTLAKVLPA (91 aa)) constitute a Dicer dsRNA-binding fold domain. In terms of domain architecture, PAZ spans 888–1012 (TTTDRVPYNF…LVLETLLISQ (125 aa)). 2 RNase III domains span residues 1050–1190 (IDIA…LTAQ) and 1243–1406 (CSQI…VDTG). Mg(2+)-binding residues include Glu1283, Asp1392, and Glu1395. The 75-residue stretch at 1440 to 1514 (THITSIITTQ…AKQAVAIYED (75 aa)) folds into the DRBM domain. 4 residues coordinate Zn(2+): Cys1452, His1485, Cys1526, and Cys1528.

Belongs to the helicase family. Dicer subfamily. Mg(2+) serves as cofactor. Requires Mn(2+) as cofactor.

Its function is as follows. Dicer-like endonuclease which seems not to be involved in cleaving double-stranded RNA in the RNA interference (RNAi) pathway, contrary to its DCL2 counterpart. The chain is Dicer-like protein 1 (DCL1) from Pyricularia oryzae (strain 70-15 / ATCC MYA-4617 / FGSC 8958) (Rice blast fungus).